The chain runs to 406 residues: 2,3-bisphosphoglycerate-independent phosphoglycerate mutase (406 aa).

Residues 156–165 (ITEGDPHKEG) are compositionally biased toward basic and acidic residues. The segment at 156 to 177 (ITEGDPHKEGVPIPEVKPLDNS) is disordered.

Belongs to the BPG-independent phosphoglycerate mutase family. A-PGAM subfamily.

It carries out the reaction (2R)-2-phosphoglycerate = (2R)-3-phosphoglycerate. It functions in the pathway carbohydrate degradation; glycolysis; pyruvate from D-glyceraldehyde 3-phosphate: step 3/5. Catalyzes the interconversion of 2-phosphoglycerate and 3-phosphoglycerate. This is 2,3-bisphosphoglycerate-independent phosphoglycerate mutase from Methanococcus aeolicus (strain ATCC BAA-1280 / DSM 17508 / OCM 812 / Nankai-3).